The chain runs to 300 residues: Protoheme IX farnesyltransferase (300 aa).

9 consecutive transmembrane segments (helical) span residues 24–44 (VTQLAVFCAVIGMFLATPGMV), 48–68 (VLLGGTVGIGLLAGSAFAINC), 94–114 (LQILAFSTVLGGLGAWTLYTF), 118–138 (LTMWLTIATFVGYAVIYTLLL), 146–166 (IVIGGASGAMPPALGWAAVTG), 172–192 (AWILVLIIFVWTPPHFWVLAL), 217–237 (LHILLYTVILFAVTMMPFISG), 239–259 (SGAVYLTSAVLLGAIFLAYAW), and 278–298 (IVYLSLLFAALLVDHYARPVI).

Belongs to the UbiA prenyltransferase family. Protoheme IX farnesyltransferase subfamily.

Its subcellular location is the cell inner membrane. It carries out the reaction heme b + (2E,6E)-farnesyl diphosphate + H2O = Fe(II)-heme o + diphosphate. It functions in the pathway porphyrin-containing compound metabolism; heme O biosynthesis; heme O from protoheme: step 1/1. In terms of biological role, converts heme B (protoheme IX) to heme O by substitution of the vinyl group on carbon 2 of heme B porphyrin ring with a hydroxyethyl farnesyl side group. The sequence is that of Protoheme IX farnesyltransferase from Burkholderia thailandensis (strain ATCC 700388 / DSM 13276 / CCUG 48851 / CIP 106301 / E264).